The following is a 411-amino-acid chain: Serine hydroxymethyltransferase (411 aa).

Residues L117 and 121–123 (GHL) contribute to the (6S)-5,6,7,8-tetrahydrofolate site. N6-(pyridoxal phosphate)lysine is present on K226. Residues E241 and 349 to 351 (SPF) each bind (6S)-5,6,7,8-tetrahydrofolate.

It belongs to the SHMT family. As to quaternary structure, homodimer. Pyridoxal 5'-phosphate is required as a cofactor.

It is found in the cytoplasm. The enzyme catalyses (6R)-5,10-methylene-5,6,7,8-tetrahydrofolate + glycine + H2O = (6S)-5,6,7,8-tetrahydrofolate + L-serine. It participates in one-carbon metabolism; tetrahydrofolate interconversion. Its pathway is amino-acid biosynthesis; glycine biosynthesis; glycine from L-serine: step 1/1. In terms of biological role, catalyzes the reversible interconversion of serine and glycine with tetrahydrofolate (THF) serving as the one-carbon carrier. This reaction serves as the major source of one-carbon groups required for the biosynthesis of purines, thymidylate, methionine, and other important biomolecules. Also exhibits THF-independent aldolase activity toward beta-hydroxyamino acids, producing glycine and aldehydes, via a retro-aldol mechanism. The chain is Serine hydroxymethyltransferase from Oceanobacillus iheyensis (strain DSM 14371 / CIP 107618 / JCM 11309 / KCTC 3954 / HTE831).